Reading from the N-terminus, the 146-residue chain is 3-dehydroquinate dehydratase (146 aa).

The active-site Proton acceptor is the Tyr22. Substrate is bound by residues Asn73, His79, and Asp86. The Proton donor role is filled by His99. Residues 100–101 and Arg110 contribute to the substrate site; that span reads LS.

Belongs to the type-II 3-dehydroquinase family. In terms of assembly, homododecamer.

The catalysed reaction is 3-dehydroquinate = 3-dehydroshikimate + H2O. Its pathway is metabolic intermediate biosynthesis; chorismate biosynthesis; chorismate from D-erythrose 4-phosphate and phosphoenolpyruvate: step 3/7. Functionally, catalyzes a trans-dehydration via an enolate intermediate. This is 3-dehydroquinate dehydratase from Synechococcus sp. (strain CC9605).